The chain runs to 428 residues: Tyrosine--tRNA ligase (428 aa).

Tyr-41 is a binding site for L-tyrosine. Positions 46 to 55 (PTADSLHLGH) match the 'HIGH' region motif. Position 148 is an N6-acetyllysine (Lys-148). Tyr-179 and Gln-183 together coordinate L-tyrosine. The short motif at 239-243 (KFGKT) is the 'KMSKS' region element. Lys-242 serves as a coordination point for ATP. The region spanning 361–418 (ADLMQALVDSELQPSRGQARKTIASNAITINGEKQSDPEYFFKEEDRLFGRFTLLRRG) is the S4 RNA-binding domain.

This sequence belongs to the class-I aminoacyl-tRNA synthetase family. TyrS type 1 subfamily. Homodimer.

It localises to the cytoplasm. It carries out the reaction tRNA(Tyr) + L-tyrosine + ATP = L-tyrosyl-tRNA(Tyr) + AMP + diphosphate + H(+). Catalyzes the attachment of tyrosine to tRNA(Tyr) in a two-step reaction: tyrosine is first activated by ATP to form Tyr-AMP and then transferred to the acceptor end of tRNA(Tyr). The chain is Tyrosine--tRNA ligase from Escherichia coli O1:K1 / APEC.